The sequence spans 434 residues: Serine hydroxymethyltransferase (434 aa).

Residues Leu-133 and 137–139 (GHL) contribute to the (6S)-5,6,7,8-tetrahydrofolate site. Lys-242 is subject to N6-(pyridoxal phosphate)lysine.

Belongs to the SHMT family. In terms of assembly, homodimer. It depends on pyridoxal 5'-phosphate as a cofactor.

The protein localises to the cytoplasm. It catalyses the reaction (6R)-5,10-methylene-5,6,7,8-tetrahydrofolate + glycine + H2O = (6S)-5,6,7,8-tetrahydrofolate + L-serine. It participates in one-carbon metabolism; tetrahydrofolate interconversion. Its pathway is amino-acid biosynthesis; glycine biosynthesis; glycine from L-serine: step 1/1. In terms of biological role, catalyzes the reversible interconversion of serine and glycine with tetrahydrofolate (THF) serving as the one-carbon carrier. This reaction serves as the major source of one-carbon groups required for the biosynthesis of purines, thymidylate, methionine, and other important biomolecules. Also exhibits THF-independent aldolase activity toward beta-hydroxyamino acids, producing glycine and aldehydes, via a retro-aldol mechanism. This is Serine hydroxymethyltransferase from Methylobacterium radiotolerans (strain ATCC 27329 / DSM 1819 / JCM 2831 / NBRC 15690 / NCIMB 10815 / 0-1).